The following is a 595-amino-acid chain: uncharacterized protein (595 aa).

The segment at 112–180 (VRPPGYDPES…KDVFGRALPT (69 aa)) is disordered. Composition is skewed to basic and acidic residues over residues 120-133 (ESAK…EKHK) and 161-174 (RTQE…KDVF). The CCHC-type; degenerate zinc finger occupies 211-228 (VKCLRCGNFGHQSGDRDC). 2 disordered regions span residues 254 to 290 (HTDP…IVAE) and 310 to 595 (KSMS…RRRN). Residues 256 to 267 (DPSEPLKWELKQ) are compositionally biased toward basic and acidic residues. Basic residues-rich tracts occupy residues 316–331 (KKRK…KHSS) and 351–364 (RGSK…KKSK). Basic and acidic residues-rich tracts occupy residues 414–428 (HYYD…EIVD), 470–539 (VSEK…HVYE), and 547–565 (FSDR…ESNR). Basic residues predominate over residues 584–595 (RKHRYSTNRRRN).

This is an uncharacterized protein from Arabidopsis thaliana (Mouse-ear cress).